The sequence spans 258 residues: Na(+)-translocating NADH-quinone reductase subunit C (258 aa).

The chain crosses the membrane as a helical span at residues 14-34; it reads LIVVLAVSLICSVIVAGAVVG. Ser-226 carries the FMN phosphoryl serine modification.

It belongs to the NqrC family. In terms of assembly, composed of six subunits; NqrA, NqrB, NqrC, NqrD, NqrE and NqrF. Requires FMN as cofactor.

It is found in the cell inner membrane. The enzyme catalyses a ubiquinone + n Na(+)(in) + NADH + H(+) = a ubiquinol + n Na(+)(out) + NAD(+). NQR complex catalyzes the reduction of ubiquinone-1 to ubiquinol by two successive reactions, coupled with the transport of Na(+) ions from the cytoplasm to the periplasm. NqrA to NqrE are probably involved in the second step, the conversion of ubisemiquinone to ubiquinol. The chain is Na(+)-translocating NADH-quinone reductase subunit C from Neisseria meningitidis serogroup A / serotype 4A (strain DSM 15465 / Z2491).